We begin with the raw amino-acid sequence, 507 residues long: Eukaryotic translation initiation factor 4E-binding protein Mextli homolog (507 aa).

The interval 126 to 163 (RPEGQHDPAPTVGIPPSATSPPTQVTSSVTSPVPSSPQ) is disordered. Over residues 140–158 (PPSATSPPTQVTSSVTSPV) the composition is skewed to low complexity. Residues 242 to 307 (QLRHEMIIRN…EDIERAKDMI (66 aa)) enclose the KH domain. 2 disordered regions span residues 314-360 (NMSP…DEDI) and 395-424 (ARPS…QQEP). Residues 329 to 348 (QYSGMSSENQSIPSQQNTAN) show a composition bias toward polar residues. Residues 349–360 (IDEDDDDDDEDI) show a composition bias toward acidic residues.

As to quaternary structure, interacts with eukaryotic translation initiation factor ife-3.

The protein localises to the cytoplasm. Functionally, plays a role in promoting translation. This is Eukaryotic translation initiation factor 4E-binding protein Mextli homolog from Caenorhabditis elegans.